Reading from the N-terminus, the 779-residue chain is Acyl-CoA dehydrogenase family member 11 (779 aa).

3 positions are modified to N6-acetyllysine: Lys-163, Lys-166, and Lys-175. The residue at position 210 (Ser-210) is a Phosphoserine. Tyr-323 carries the post-translational modification Phosphotyrosine. Residues Lys-368 and Lys-390 each carry the N6-succinyllysine modification. Residues 503 to 513 (FCMTEPNVSSS), 511 to 513 (SSS), 537 to 539 (WSS), and Ser-539 each bind FAD. Ser-513 lines the substrate pocket. 628 to 631 (GPGR) contributes to the substrate binding site. Residues Arg-656, Gln-726, and 726 to 730 (QVHGG) each bind FAD. A substrate-binding site is contributed by Gly-754. FAD-binding positions include 755–757 (PDE) and Glu-757. An N6-acetyllysine modification is found at Lys-765.

Belongs to the acyl-CoA dehydrogenase family. In terms of assembly, homodimer. Requires FAD as cofactor.

The protein resides in the peroxisome. It is found in the mitochondrion membrane. It carries out the reaction a 2,3-saturated acyl-CoA + oxidized [electron-transfer flavoprotein] + H(+) = a (2E)-enoyl-CoA + reduced [electron-transfer flavoprotein]. It catalyses the reaction docosanoyl-CoA + oxidized [electron-transfer flavoprotein] + H(+) = (2E)-docosenoyl-CoA + reduced [electron-transfer flavoprotein]. The catalysed reaction is tetracosanoyl-CoA + oxidized [electron-transfer flavoprotein] + H(+) = (2E)-tetracosenoyl-CoA + reduced [electron-transfer flavoprotein]. The enzyme catalyses eicosanoyl-CoA + oxidized [electron-transfer flavoprotein] + H(+) = (2E)-eicosenoyl-CoA + reduced [electron-transfer flavoprotein]. It carries out the reaction hexacosanoyl-CoA + oxidized [electron-transfer flavoprotein] + H(+) = (2E)-hexacosenoyl-CoA + reduced [electron-transfer flavoprotein]. It catalyses the reaction tricosanoyl-CoA + oxidized [electron-transfer flavoprotein] + H(+) = (2E)-tricosenoyl-CoA + reduced [electron-transfer flavoprotein]. It participates in lipid metabolism; fatty acid beta-oxidation. Functionally, acyl-CoA dehydrogenase, that exhibits maximal activity towards saturated C22-CoA. Probably participates in beta-oxydation and energy production but could also play a role in the metabolism of specific fatty acids to control fatty acids composition of cellular lipids in brain. This chain is Acyl-CoA dehydrogenase family member 11 (Acad11), found in Mus musculus (Mouse).